The following is a 695-amino-acid chain: Putative ATP-dependent DNA helicase R568 (695 aa).

The region spanning 86-499 (KFSEEQIKYI…FRNEEIFDSN (414 aa)) is the UvrD-like helicase ATP-binding domain. 107–114 (ACAGSGKT) lines the ATP pocket.

This sequence belongs to the helicase family. UvrD subfamily.

The enzyme catalyses Couples ATP hydrolysis with the unwinding of duplex DNA by translocating in the 3'-5' direction.. It carries out the reaction ATP + H2O = ADP + phosphate + H(+). Its function is as follows. ATP-dependent DNA helicase. The chain is Putative ATP-dependent DNA helicase R568 from Acanthamoeba polyphaga mimivirus (APMV).